The chain runs to 175 residues: Large ribosomal subunit protein uL10 (175 aa).

Belongs to the universal ribosomal protein uL10 family. In terms of assembly, part of the ribosomal stalk of the 50S ribosomal subunit. The N-terminus interacts with L11 and the large rRNA to form the base of the stalk. The C-terminus forms an elongated spine to which L12 dimers bind in a sequential fashion forming a multimeric L10(L12)X complex.

Its function is as follows. Forms part of the ribosomal stalk, playing a central role in the interaction of the ribosome with GTP-bound translation factors. The protein is Large ribosomal subunit protein uL10 of Synechococcus elongatus (strain ATCC 33912 / PCC 7942 / FACHB-805) (Anacystis nidulans R2).